The following is a 127-amino-acid chain: Protein NEGATIVE REGULATOR OF RESISTANCE (127 aa).

Disordered regions lie at residues methionine 1 to valine 28 and threonine 47 to alanine 127. Positions proline 112–alanine 127 are enriched in low complexity.

The protein belongs to the NPR1-interactor family. Interacts with NPR1/NH1. Interacts with NPR3/NH3.

Its subcellular location is the nucleus. Its function is as follows. Acts as a negative regulator of disease resistance. Acts on basal resistance, age-related resistance and resistance mediated by the LRR receptor kinase XA21. Plants over-expressing NRR display enhanced susceptibility to the bacterial blight Xanthomonas oryzae pv. oryzae (Xoo). Binds to and represses NPR1/NH1-mediated transcriptional activation of LG2 in vitro. The chain is Protein NEGATIVE REGULATOR OF RESISTANCE from Oryza sativa subsp. japonica (Rice).